The chain runs to 695 residues: Follicle-stimulating hormone receptor (695 aa).

An N-terminal signal peptide occupies residues 1-17 (MSLLLVSLLAFLTLGSG). Cystine bridges form between Cys-18–Cys-25 and Cys-23–Cys-32. The 29-residue stretch at 18–46 (CHHRICHCSNGVFLCQESKVTEIPPDLPR) folds into the LRRNT domain. At 18 to 366 (CHHRICHCSN…EDIMGHDILR (349 aa)) the chain is on the extracellular side. 9 LRR repeats span residues 49 to 72 (VELR…FGDL), 73 to 97 (EKIE…LPKL), 98 to 118 (HEIR…AFQN), 119 to 143 (LPNL…KIQS), 144 to 169 (LQKV…VGLS), 170 to 192 (FESM…AFNG), 193 to 216 (TQLD…VFQG), 217 to 240 (ASGP…GLEN), and 241 to 259 (LKKL…PSLE). Residues Asn-191 and Asn-199 are each glycosylated (N-linked (GlcNAc...) asparagine). Intrachain disulfides connect Cys-275-Cys-346, Cys-276-Cys-292, Cys-276-Cys-356, and Cys-292-Cys-338. Asn-293 is a glycosylation site (N-linked (GlcNAc...) asparagine). Tyr-335 bears the Sulfotyrosine mark. Residues 367-387 (VLIWFISILAITGNIIVLVIL) traverse the membrane as a helical segment. Topologically, residues 388–398 (ITSQYKLTVPR) are cytoplasmic. The chain crosses the membrane as a helical span at residues 399–421 (FLMCNLAFADLCIGIYLLLIASV). The Extracellular portion of the chain corresponds to 422-443 (DIHTKTQYHNYAIDWQTGAGCD). An intrachain disulfide couples Cys-442 to Cys-517. Residues 444–465 (AAGFFTVFASELSVYTLTAITL) form a helical membrane-spanning segment. Residues 466–485 (ERWHTITHAMQLQCKVQLRH) lie on the Cytoplasmic side of the membrane. The chain crosses the membrane as a helical span at residues 486–508 (AASIMLVGWIFAFTVALFPIFGI). Residues 509-528 (SSYMKVSICLPMDIDSPLSQ) are Extracellular-facing. Residues 529–550 (LYVVSLLVLNVLAFVVICGCYT) traverse the membrane as a helical segment. The Cytoplasmic portion of the chain corresponds to 551-573 (HIYLTVRNPNIMSSSSDTKIAKR). Residues 574-597 (MAMLIFTDFLCMAPISFFAISASL) form a helical membrane-spanning segment. At 598 to 608 (KVPLITVSKSK) the chain is on the extracellular side. Residues 609 to 630 (ILLVLFYPINSCANPFLYAIFT) traverse the membrane as a helical segment. Residues 631 to 695 (KNFRRDVFIL…LIPLSRLAQN (65 aa)) lie on the Cytoplasmic side of the membrane.

It belongs to the G-protein coupled receptor 1 family. FSH/LSH/TSH subfamily. In terms of assembly, homotrimer. Functions as a homotrimer binding the FSH hormone heterodimer composed of CGA and FSHB. Interacts with ARRB2. Interacts with APPL2; interaction is independent of follicle stimulating hormone stimulation. Post-translationally, N-glycosylated; indirectly required for FSH-binding, possibly via a conformational change that allows high affinity binding of hormone. Sulfated.

The protein resides in the cell membrane. Its function is as follows. G protein-coupled receptor for follitropin, the follicle-stimulating hormone. Through cAMP production activates the downstream PI3K-AKT and ERK1/ERK2 signaling pathways. The chain is Follicle-stimulating hormone receptor (FSHR) from Sus scrofa (Pig).